A 433-amino-acid polypeptide reads, in one-letter code: Serine--tRNA ligase (433 aa).

235–237 (TSE) serves as a coordination point for L-serine. 266–268 (RSE) contacts ATP. An L-serine-binding site is contributed by E289. 353–356 (EISS) serves as a coordination point for ATP. S388 is a binding site for L-serine.

Belongs to the class-II aminoacyl-tRNA synthetase family. Type-1 seryl-tRNA synthetase subfamily. As to quaternary structure, homodimer. The tRNA molecule binds across the dimer.

The protein localises to the cytoplasm. It carries out the reaction tRNA(Ser) + L-serine + ATP = L-seryl-tRNA(Ser) + AMP + diphosphate + H(+). It catalyses the reaction tRNA(Sec) + L-serine + ATP = L-seryl-tRNA(Sec) + AMP + diphosphate + H(+). It participates in aminoacyl-tRNA biosynthesis; selenocysteinyl-tRNA(Sec) biosynthesis; L-seryl-tRNA(Sec) from L-serine and tRNA(Sec): step 1/1. Catalyzes the attachment of serine to tRNA(Ser). Is also able to aminoacylate tRNA(Sec) with serine, to form the misacylated tRNA L-seryl-tRNA(Sec), which will be further converted into selenocysteinyl-tRNA(Sec). The chain is Serine--tRNA ligase from Burkholderia cepacia (Pseudomonas cepacia).